A 178-amino-acid chain; its full sequence is Ribosome maturation factor RimP (178 aa).

This sequence belongs to the RimP family.

Its subcellular location is the cytoplasm. Required for maturation of 30S ribosomal subunits. This Streptococcus pyogenes serotype M4 (strain MGAS10750) protein is Ribosome maturation factor RimP.